Consider the following 357-residue polypeptide: Gene 58 protein (357 aa).

It belongs to the herpesviridae BMRF2 family.

The protein is Gene 58 protein (58) of Saimiri sciureus (Common squirrel monkey).